The following is a 299-amino-acid chain: Serine/threonine-protein kinase 1 (299 aa).

The Protein kinase domain maps to isoleucine 39–phenylalanine 277. Residues phenylalanine 45 to valine 53 and lysine 66 each bind ATP. Aspartate 153 (proton acceptor) is an active-site residue.

This sequence belongs to the protein kinase superfamily. Ser/Thr protein kinase family.

The protein resides in the virion. It localises to the host cytoplasm. It carries out the reaction L-seryl-[protein] + ATP = O-phospho-L-seryl-[protein] + ADP + H(+). The catalysed reaction is L-threonyl-[protein] + ATP = O-phospho-L-threonyl-[protein] + ADP + H(+). Essential for viral replication. It may mediate the virus progression through DNA replication. In African swine fever virus (isolate Tick/Malawi/Lil 20-1/1983) (ASFV), this protein is Serine/threonine-protein kinase 1.